Consider the following 563-residue polypeptide: CTP synthase (563 aa).

Residues 1-278 (MAKATAKNSA…DLRVLEQLHL (278 aa)) are amidoligase domain. Ser24 is a binding site for CTP. Ser24 serves as a coordination point for UTP. 25–30 (SLGKGI) is an ATP binding site. Residue Tyr65 participates in L-glutamine binding. Asp82 contributes to the ATP binding site. Positions 82 and 151 each coordinate Mg(2+). Residues 158 to 160 (DIE), 198 to 203 (KTKPSQ), and Lys234 each bind CTP. Residues 198–203 (KTKPSQ) and Lys234 each bind UTP. ATP is bound at residue 250 to 252 (KDV). The 243-residue stretch at 303–545 (TIALVGKYIA…VKAALEQKKA (243 aa)) folds into the Glutamine amidotransferase type-1 domain. Gly363 lines the L-glutamine pocket. The Nucleophile; for glutamine hydrolysis role is filled by Cys390. Residues 391 to 394 (LGMQ), Glu414, and Arg471 each bind L-glutamine. Active-site residues include His518 and Glu520. The tract at residues 542–563 (QKKANGKKPTAPSEKTKKTKTK) is disordered.

The protein belongs to the CTP synthase family. Homotetramer.

It carries out the reaction UTP + L-glutamine + ATP + H2O = CTP + L-glutamate + ADP + phosphate + 2 H(+). The enzyme catalyses L-glutamine + H2O = L-glutamate + NH4(+). The catalysed reaction is UTP + NH4(+) + ATP = CTP + ADP + phosphate + 2 H(+). It functions in the pathway pyrimidine metabolism; CTP biosynthesis via de novo pathway; CTP from UDP: step 2/2. With respect to regulation, allosterically activated by GTP, when glutamine is the substrate; GTP has no effect on the reaction when ammonia is the substrate. The allosteric effector GTP functions by stabilizing the protein conformation that binds the tetrahedral intermediate(s) formed during glutamine hydrolysis. Inhibited by the product CTP, via allosteric rather than competitive inhibition. In terms of biological role, catalyzes the ATP-dependent amination of UTP to CTP with either L-glutamine or ammonia as the source of nitrogen. Regulates intracellular CTP levels through interactions with the four ribonucleotide triphosphates. The polypeptide is CTP synthase (Fibrobacter succinogenes (strain ATCC 19169 / S85)).